The following is a 624-amino-acid chain: E3 ubiquitin-protein ligase RLIM (624 aa).

Met-1 carries the post-translational modification N-acetylmethionine. Over residues 1–11 the composition is skewed to basic and acidic residues; sequence MENSDSNDKGS. Disordered stretches follow at residues 1 to 25, 72 to 251, 257 to 276, 291 to 363, and 424 to 522; these read MENS…QMDR, KEGP…SQTF, NETE…QQIS, TRNA…RGGF, and SDSE…TFDE. Positions 104 to 132 are enriched in polar residues; that stretch reads SVRQTGNTTRSGQRGNQSWRAVSRTNPNS. The span at 142 to 153 shows a compositional bias: low complexity; the sequence is NVNRNNGSQNSE. Ser-164 carries the post-translational modification Phosphoserine. A compositionally biased stretch (polar residues) spans 165-188; that stretch reads GENVENNSQRQVENPRSESTSARP. Residues Ser-195, Ser-228, Ser-230, and Ser-276 each carry the phosphoserine modification. Positions 214-229 are enriched in basic and acidic residues; the sequence is RSPDHRRTRARAERSR. Residues 291–315 show a composition bias toward polar residues; the sequence is TRNASQGAGSSDTAASGESTGSGQR. Over residues 329–339 the composition is skewed to basic and acidic residues; the sequence is RPGEYRQRDSI. Residues 340–356 are compositionally biased toward polar residues; it reads ASRTRSRSQTPNNTVTY. Residues 445–454 show a composition bias toward gly residues; sequence GRGGSGGGSS. The segment covering 455 to 507 has biased composition (low complexity); the sequence is SGSSSSSSSSSSSSSSSSSSSSPSSSSGGESSETSSDLFEGSNEGSSSSGSSG. The RING-type zinc-finger motif lies at 570-611; the sequence is CSVCITEYTEGNKLRKLPCSHEYHVHCIDRWLSENSTCPICR. Residues 621-624 carry the PDZ-binding motif; sequence ESVV.

This sequence belongs to the RNF12 family. In terms of assembly, interacts with LIM/homeobox factors such as LHX3. Interacts with LDB1, LDB2 and SIN3A. Interacts with LIMK1. Interacts (via N-terminus) with TERF1. Interacts (via C-terminus) with ESR1. As to expression, expressed in many tissues.

Its subcellular location is the nucleus. It catalyses the reaction S-ubiquitinyl-[E2 ubiquitin-conjugating enzyme]-L-cysteine + [acceptor protein]-L-lysine = [E2 ubiquitin-conjugating enzyme]-L-cysteine + N(6)-ubiquitinyl-[acceptor protein]-L-lysine.. It functions in the pathway protein modification; protein ubiquitination. Functionally, E3 ubiquitin-protein ligase. Acts as a negative coregulator for LIM homeodomain transcription factors by mediating the ubiquitination and subsequent degradation of LIM cofactors LDB1 and LDB2 and by mediating the recruitment the SIN3a/histone deacetylase corepressor complex. Ubiquitination and degradation of LIM cofactors LDB1 and LDB2 allows DNA-bound LIM homeodomain transcription factors to interact with other protein partners such as RLIM. Plays a role in telomere length-mediated growth suppression by mediating the ubiquitination and degradation of TERF1. By targeting ZFP42 for degradation, acts as an activator of random inactivation of X chromosome in the embryo, a stochastic process in which one X chromosome is inactivated to minimize sex-related dosage differences of X-encoded genes in somatic cells of female placental mammals. The polypeptide is E3 ubiquitin-protein ligase RLIM (RLIM) (Homo sapiens (Human)).